Reading from the N-terminus, the 508-residue chain is Prenylcysteine oxidase 1 (508 aa).

The signal sequence occupies residues 1 to 31; the sequence is MDPAAPGLACSILRLGLGLLLLCSWWYPGSA. N-linked (GlcNAc...) asparagine glycans are attached at residues Asn199, Asn291, and Asn356.

It belongs to the prenylcysteine oxidase family. FAD is required as a cofactor.

It localises to the lysosome. The enzyme catalyses an S-polyprenyl-L-cysteine + O2 + H2O = a polyprenal + L-cysteine + H2O2. It carries out the reaction S-(2E,6E)-farnesyl-L-cysteine + O2 + H2O = (2E,6E)-farnesal + L-cysteine + H2O2. It catalyses the reaction [(2E,6E,10E)-geranylgeranyl]-L-cysteine + O2 + H2O = (2E,6E,10E)-geranylgeranial + L-cysteine + H2O2. Prenylcysteine oxidase that cleaves the thioether bond of prenyl-L-cysteines, such as farnesylcysteine and geranylgeranylcysteine. Only active against free prenylcysteines and not prenylcysteine residues within prenylated proteins or peptides. Involved in the final step in the degradation of prenylated proteins, by degrading prenylcysteines after the protein has been degraded. The polypeptide is Prenylcysteine oxidase 1 (Bos taurus (Bovine)).